Reading from the N-terminus, the 411-residue chain is Keratin, type I cytoskeletal 12 (411 aa).

The segment at 1–42 is head; sequence DHDYEFPGIQAFAGLGMGFGGSPGGGSLYLPSGNDGGLLSGS. Positions 43–78 are coil 1A; that stretch reads EKETMQNLNDRLASYLDKVRALEDANAELENKIREW. In terms of domain architecture, IF rod spans 43–359; that stretch reads EKETMQNLND…RLLDGEAQGD (317 aa). Positions 83–101 are linker 1; the sequence is GHGHGDCGPQHDYSKYHPL. Positions 102–193 are coil 1B; that stretch reads IEDLRNKIIS…KNHEEELQSC (92 aa). A linker 12 region spans residues 194–216; it reads RAGGPGEVSVEMDAAPGVDLTRL. Residues 217 to 354 are coil 2; the sequence is LNDMRAQYEA…IETYRRLLDG (138 aa). A tail region spans residues 355-411; sequence EAQGDGLDESSAMTGSRSQAQSIDSSKDPSKTRKIKTIVQEVVNGEVVSSQVQEIQN. Positions 356 to 387 are disordered; that stretch reads AQGDGLDESSAMTGSRSQAQSIDSSKDPSKTR. The span at 365-378 shows a compositional bias: polar residues; the sequence is SAMTGSRSQAQSID.

Belongs to the intermediate filament family. Heterotetramer of two type I and two type II keratins. Keratin-3 associates with keratin-12. In terms of tissue distribution, cornea specific. Associated mainly with all layers of the central corneal epithelium and also found in the suprabasal limbal epithelium.

Its function is as follows. Involved in corneal epithelium organization, integrity and corneal keratin expression. This chain is Keratin, type I cytoskeletal 12 (KRT12), found in Oryctolagus cuniculus (Rabbit).